Consider the following 209-residue polypeptide: Large ribosomal subunit protein uL3 (209 aa).

The interval Ala-122–Asn-152 is disordered.

It belongs to the universal ribosomal protein uL3 family. Part of the 50S ribosomal subunit. Forms a cluster with proteins L14 and L19. Interacts with RNA helicase CshA.

In terms of biological role, one of the primary rRNA binding proteins, it binds directly near the 3'-end of the 23S rRNA, where it nucleates assembly of the 50S subunit. Strongly stimulates 23S rRNA precursor processing by mini-ribonuclease 3 (MrnC); 20-30% DMSO can replace L3, suggesting the protein may alter rRNA conformation. The protein is Large ribosomal subunit protein uL3 of Bacillus subtilis (strain 168).